The following is a 176-amino-acid chain: Ribosome maturation factor RimM (176 aa).

One can recognise a PRC barrel domain in the interval 100–173 (KDEYHYHDLI…WLLINPPPGL (74 aa)).

This sequence belongs to the RimM family. As to quaternary structure, binds ribosomal protein uS19.

The protein localises to the cytoplasm. An accessory protein needed during the final step in the assembly of 30S ribosomal subunit, possibly for assembly of the head region. Essential for efficient processing of 16S rRNA. May be needed both before and after RbfA during the maturation of 16S rRNA. It has affinity for free ribosomal 30S subunits but not for 70S ribosomes. In Prochlorococcus marinus (strain NATL2A), this protein is Ribosome maturation factor RimM.